The primary structure comprises 407 residues: Resuscitation-promoting factor RpfA (407 aa).

An N-terminal signal peptide occupies residues 1–33 (MSGRHRKPTTSNVSVAKIAFTGAVLGGGGIAMA). Disordered stretches follow at residues 142–253 (VNGE…ADLA) and 271–371 (LPAA…AETP). The span at 148-159 (PLAPPPADPAPP) shows a compositional bias: pro residues. Positions 160–170 (VELAANDLPAP) are enriched in low complexity. The span at 171–193 (LGEPLPAAPADPAPPADLAPPAP) shows a compositional bias: pro residues. Repeat copies occupy residues 178 to 185 (APADPAPP) and 186 to 193 (ADLAPPAP). Residues 178-359 (APADPAPPAD…PDPQPADAPP (182 aa)) form a 12 X 8 AA approximate repeats of A-P-A-D-L-A-P-P region. A compositionally biased stretch (low complexity) spans 194–210 (ADVAPPVELAVNDLPAP). Over residues 211-249 (LGEPLPAAPADPAPPADLAPPAPADLAPPAPADLAPPAP) the composition is skewed to pro residues. Repeat copies occupy residues 218–225 (APADPAPP), 226–233 (ADLAPPAP), 240–247 (APADLAPP), 248–255 (APADLAPP), 274–281 (APAELAPP), 287–294 (ASADLAPP), 295–302 (APADLAPP), 303–310 (APAELAPP), 311–318 (APADLAPP), and 353–359 (QPADAPP). Over residues 274–292 (APAELAPPADLAPASADLA) the composition is skewed to low complexity. Pro residues-rich tracts occupy residues 293 to 312 (PPAP…PPAP) and 350 to 361 (PDPQPADAPPPG).

The protein belongs to the transglycosylase family. Rpf subfamily.

Functionally, factor that stimulates resuscitation of dormant cells. Has peptidoglycan (PG) hydrolytic activity. This chain is Resuscitation-promoting factor RpfA (rpfA), found in Mycobacterium tuberculosis (strain CDC 1551 / Oshkosh).